Reading from the N-terminus, the 760-residue chain is Xaa-Pro dipeptidyl-peptidase (760 aa).

Catalysis depends on charge relay system residues Ser-349, Asp-469, and His-499.

The protein belongs to the peptidase S15 family. In terms of assembly, homodimer.

It is found in the cytoplasm. The enzyme catalyses Hydrolyzes Xaa-Pro-|- bonds to release unblocked, N-terminal dipeptides from substrates including Ala-Pro-|-p-nitroanilide and (sequentially) Tyr-Pro-|-Phe-Pro-|-Gly-Pro-|-Ile.. Its function is as follows. Removes N-terminal dipeptides sequentially from polypeptides having unsubstituted N-termini provided that the penultimate residue is proline. The sequence is that of Xaa-Pro dipeptidyl-peptidase from Streptococcus pyogenes serotype M6 (strain ATCC BAA-946 / MGAS10394).